A 320-amino-acid polypeptide reads, in one-letter code: Malate dehydrogenase (320 aa).

Residues 10 to 15 (GSGMIG) and Asp-34 contribute to the NAD(+) site. Substrate is bound by residues Arg-83 and Arg-89. NAD(+) contacts are provided by residues Asn-96 and 119-121 (ITN). Substrate-binding residues include Asn-121 and Arg-152. His-176 serves as the catalytic Proton acceptor.

The protein belongs to the LDH/MDH superfamily. MDH type 3 family.

It carries out the reaction (S)-malate + NAD(+) = oxaloacetate + NADH + H(+). Its function is as follows. Catalyzes the reversible oxidation of malate to oxaloacetate. The polypeptide is Malate dehydrogenase (Rhizobium johnstonii (strain DSM 114642 / LMG 32736 / 3841) (Rhizobium leguminosarum bv. viciae)).